A 562-amino-acid polypeptide reads, in one-letter code: Tissue-type plasminogen activator (562 aa).

A signal peptide spans 1 to 20 (MNAMKRGLCCVLLLCGAVFA). Positions 21 to 32 (LPSQEIHARVRR) are excised as a propeptide. Residues 33-35 (GAR) constitute a propeptide, removed by plasmin. A Fibronectin type-I domain is found at 39–81 (VICRDEKTQMIYQQHQSWLRPVLRSNRVEYCWCNSGRAQCHSV). Intrachain disulfides connect Cys-41/Cys-71, Cys-69/Cys-78, Cys-86/Cys-97, Cys-91/Cys-108, Cys-110/Cys-119, Cys-127/Cys-208, Cys-148/Cys-190, Cys-179/Cys-203, Cys-215/Cys-296, Cys-236/Cys-278, Cys-267/Cys-291, Cys-299/Cys-430, Cys-342/Cys-358, Cys-350/Cys-419, Cys-444/Cys-519, Cys-476/Cys-492, and Cys-509/Cys-537. The interval 42 to 52 (RDEKTQMIYQQ) is important for binding to annexin A2. The region spanning 82–120 (PVRSCSEPRCFNGGTCQQALYFSDFVCQCPEGFAGKCCE) is the EGF-like domain. Thr-96 is a glycosylation site (O-linked (Fuc) threonine). Kringle domains are found at residues 126 to 208 (TCYE…TPAC) and 214 to 296 (DCYF…VPSC). Asn-152 carries N-linked (GlcNAc...) asparagine glycosylation. A Peptidase S1 domain is found at 311 to 561 (IKGGLFADIA…YLDWIHDNMR (251 aa)). Catalysis depends on charge relay system residues His-357 and Asp-406. Residue Asn-483 is glycosylated (N-linked (GlcNAc...) asparagine). The active-site Charge relay system is Ser-513.

This sequence belongs to the peptidase S1 family. Heterodimer of chain A and chain B held by a disulfide bond. Binds to fibrin with high affinity. This interaction leads to an increase in the catalytic efficiency of the enzyme due to an increase in affinity for plasminogen. Similarly, binding to heparin increases the activation of plasminogen. Binds to annexin A2, cytokeratin-8, fibronectin and laminin. Binds to mannose receptor and the low-density lipoprotein receptor-related protein (LRP1); these proteins are involved in TPA clearance. Binds LRP1B; binding is followed by internalization and degradation. Forms heterodimer with SERPINA5. Interacts with SERPINE1. In complex with SERPINE1, interacts with SORL1. The single chain, almost fully active enzyme, can be further processed into a two-chain fully active form by a cleavage after Arg-310 catalyzed by plasmin, tissue kallikrein or factor Xa.

The protein resides in the secreted. It localises to the extracellular space. The enzyme catalyses Specific cleavage of Arg-|-Val bond in plasminogen to form plasmin.. Inhibited by SERPINA5. Inhibited by SERPINE1. In terms of biological role, converts the abundant, but inactive, zymogen plasminogen to plasmin by hydrolyzing a single Arg-Val bond in plasminogen. By controlling plasmin-mediated proteolysis, it plays an important role in tissue remodeling and degradation, in cell migration and many other physiopathological events. During oocyte activation, plays a role in cortical granule reaction in the zona reaction, which contributes to the block to polyspermy. The sequence is that of Tissue-type plasminogen activator (PLAT) from Pongo abelii (Sumatran orangutan).